The sequence spans 189 residues: dCTP deaminase (189 aa).

DCTP-binding positions include K112–R117, T136–E138, Q157, Y171, and Q181. E138 acts as the Proton donor/acceptor in catalysis.

This sequence belongs to the dCTP deaminase family. In terms of assembly, homotrimer.

It catalyses the reaction dCTP + H2O + H(+) = dUTP + NH4(+). It participates in pyrimidine metabolism; dUMP biosynthesis; dUMP from dCTP (dUTP route): step 1/2. In terms of biological role, catalyzes the deamination of dCTP to dUTP. The sequence is that of dCTP deaminase from Albidiferax ferrireducens (strain ATCC BAA-621 / DSM 15236 / T118) (Rhodoferax ferrireducens).